A 163-amino-acid chain; its full sequence is Protein-export protein SecB (163 aa).

Belongs to the SecB family. In terms of assembly, homotetramer, a dimer of dimers. One homotetramer interacts with 1 SecA dimer.

It localises to the cytoplasm. One of the proteins required for the normal export of preproteins out of the cell cytoplasm. It is a molecular chaperone that binds to a subset of precursor proteins, maintaining them in a translocation-competent state. It also specifically binds to its receptor SecA. This is Protein-export protein SecB from Azotobacter vinelandii (strain DJ / ATCC BAA-1303).